A 1142-amino-acid polypeptide reads, in one-letter code: Enamelin (1142 aa).

Residues 1–39 (MLVLRCRLGTSFPKLDNLVPKGKMKILLVFLGLLGNSVA) form the signal peptide. 6 disordered regions span residues 88-193 (QYQM…ISNE), 214-326 (YYSE…PNIR), 398-671 (PANL…QNRW), 874-955 (CCAG…LRRN), 1020-1048 (VIGTPDEGSNPEGIQSQVQENESERQQQR), and 1062-1092 (LAKHHSSTTGTPSSDGRQSPFDGDSITPTEN). A compositionally biased stretch (basic residues) spans 103-114 (HPRKSSAPKRHN). N-linked (GlcNAc...) asparagine glycosylation is found at N114 and N126. Polar residues predominate over residues 117 to 128 (DQTQETQKPNQT). Low complexity predominate over residues 140–162 (KQPSHNQPQPEEEAQPPQAFPPF). The segment covering 170–186 (QQPPWQIPQRLPPPGYG) has biased composition (pro residues). Phosphoserine is present on residues S191 and S216. Basic and acidic residues predominate over residues 223 to 234 (DFEKPKEEDPPK). Residues 240 to 285 (TEPTANSTVTETNSTQPNPKGSQGGNDTSPTGNSTPGLNTGNNPPA) show a composition bias toward polar residues. N-linked (GlcNAc...) asparagine glycans are attached at residues N245, N252, N265, and N296. The span at 429-442 (RNEKIQNPKEKPLG) shows a compositional bias: basic and acidic residues. Composition is skewed to polar residues over residues 452–470 (KNPTSPWRNSQQYEVNKSN), 507–516 (SDGQTQSQNL), and 531–544 (SETNQSELKHSSYQ). N467 carries an N-linked (GlcNAc...) asparagine glycan. A glycan (N-linked (GlcNAc...) asparagine) is linked at N534. Residues 556-588 (AKEHFPAGRNTWDHQEISPPFKEDPGRQEEHLP) show a composition bias toward basic and acidic residues. A compositionally biased stretch (acidic residues) spans 652 to 661 (NEEDPVDPTG). A compositionally biased stretch (polar residues) spans 924-934 (SPTSILPGQRN). Residue N934 is glycosylated (N-linked (GlcNAc...) asparagine). Residues 935-951 (SSEKRESQNPFRDDVST) are compositionally biased toward basic and acidic residues. A glycan (N-linked (GlcNAc...) asparagine) is linked at N1040. Residues 1068–1078 (STTGTPSSDGR) are compositionally biased toward polar residues.

Phosphorylated by FAM20C in vitro. In terms of tissue distribution, expressed in tooth particularly in odontoblast, ameloblast and cementoblast.

Its subcellular location is the secreted. The protein localises to the extracellular space. The protein resides in the extracellular matrix. Its function is as follows. Involved in the mineralization and structural organization of enamel. Involved in the extension of enamel during the secretory stage of dental enamel formation. This is Enamelin (ENAM) from Homo sapiens (Human).